Reading from the N-terminus, the 92-residue chain is Large ribosomal subunit protein eL43 (92 aa).

The C4-type zinc finger occupies 39–60 (CEFCGKYAVKRKAVGIWGCKAC).

The protein belongs to the eukaryotic ribosomal protein eL43 family.

The chain is Large ribosomal subunit protein eL43 (RPL37A) from Gossypium hirsutum (Upland cotton).